Consider the following 298-residue polypeptide: HTH-type transcriptional regulator TsaR (298 aa).

The HTH lysR-type domain maps to 1–58 (MKLQTLQALICIEEVGSLRAAAQLLHLSQPALSAAIQQLEDELKAPLLVRTKRGVSLT). The segment at residues 18–37 (LRAAAQLLHLSQPALSAAIQ) is a DNA-binding region (H-T-H motif). The toluene-4-sulfonate site is built by serine 98 and alanine 100.

The protein belongs to the LysR transcriptional regulatory family. Homotetramer. Dimer of dimers related by a twofold axis.

With respect to regulation, sensitive to oxygen. Regulates expression of the tsaMBCD1 operon and of tsaT in response to p-toluenesulfonate (TSA). Acts by binding directly to the promoter region. Binding to the tsa promoter depends on TSA concentration. The chain is HTH-type transcriptional regulator TsaR (tsaR) from Comamonas testosteroni (Pseudomonas testosteroni).